The chain runs to 46 residues: Esculentin-1SEa (46 aa).

Cysteine 40 and cysteine 46 are joined by a disulfide.

In terms of tissue distribution, expressed by the skin glands.

It is found in the secreted. Functionally, mast cell degranulating peptide. Causes histamine release from rat peritoneal mast cells in vitro. Has antibacterial activity against the Gram-negative bacterium E.coli K12 and Gram-positive bacterium M.luteus NCT C2665. This Lithobates sevosus (Dusky gopher frog) protein is Esculentin-1SEa.